Reading from the N-terminus, the 819-residue chain is Regulator of G-protein signaling rgs-7 (819 aa).

The segment covering 1 to 11 (MSDEDADEYDD) has biased composition (acidic residues). Disordered regions lie at residues 1-51 (MSDE…EMLW), 112-135 (GDDS…GYGS), and 149-259 (SSTY…HNNE). The segment covering 32 to 44 (YQDTTESTGPSEA) has biased composition (polar residues). A compositionally biased stretch (basic and acidic residues) spans 112-124 (GDDSSFRSRDRFV). The span at 149–166 (SSTYSSSSEAHRLSSLRA) shows a compositional bias: low complexity. Residues 173–185 (QLTSTTTSFQPLS) show a composition bias toward polar residues. Basic residues predominate over residues 213 to 223 (RMYRKNPKYRR). Positions 234-259 (SRLEESTSQESERAVTPESWMEHNNE) are enriched in basic and acidic residues. The 140-residue stretch at 290–429 (KHKDIRGIIF…KASQVVGDPF (140 aa)) folds into the C2 domain. Disordered regions lie at residues 515–594 (YRST…DDNG) and 617–640 (FTFS…EEDK). Composition is skewed to polar residues over residues 517 to 533 (STGS…NLLD), 559 to 568 (PSITTTTSEN), and 617 to 632 (FTFS…NLRQ). Residues 682–800 (SFESLLNNKF…LRDRLFLDLL (119 aa)) enclose the RGS domain.

In terms of assembly, interacts with egl-30.

Inhibits signal transduction by increasing the GTPase activity of G protein alpha subunit egl-30 (G-alpha(q)), thereby driving it into its inactive GDP-bound form. May organize egl-30 into a stable multiprotein signaling complex, and thereby persistently inhibit egl-30 when triggered by calcium or phospholipids. This chain is Regulator of G-protein signaling rgs-7 (rgs-7), found in Caenorhabditis elegans.